Here is a 767-residue protein sequence, read N- to C-terminus: Protein hunchback (767 aa).

3 disordered regions span residues 30 to 51 (EPGH…PIPS), 105 to 127 (QQQY…HLMG), and 174 to 212 (EKLQ…SNSS). The segment covering 39–51 (SVASSPRQSPIPS) has biased composition (polar residues). The segment covering 105–117 (QQQYQQHFQAAQQ) has biased composition (low complexity). A compositionally biased stretch (basic and acidic residues) spans 200 to 212 (EPEKEHDQMSNSS). C2H2-type zinc fingers lie at residues 242 to 264 (YKCK…TRTH), 271 to 293 (LQCP…IRKH), 299 to 321 (FQCD…RKSH), and 327 to 351 (YRCA…KYGH). Disordered regions lie at residues 357 to 424 (LDED…TSQL), 518 to 570 (QLQQ…QPQQ), and 610 to 704 (GVMT…APPS). A compositionally biased stretch (gly residues) spans 386–397 (IASGGSGSGSGS). Low complexity predominate over residues 518-527 (QLQQQNQQQS). Over residues 528 to 537 (DNEEEEQDDE) the composition is skewed to acidic residues. A compositionally biased stretch (low complexity) spans 661 to 704 (ANTSASSTASSSGNSSNASSNSNGNSSSNSSSSGTNSAAAAPPS). 2 consecutive C2H2-type zinc fingers follow at residues 714 to 736 (YECK…MGYH) and 742 to 766 (FKCN…RNAH).

It belongs to the hunchback C2H2-type zinc-finger protein family.

Its subcellular location is the nucleus. Gap class segmentation protein that controls development of head structures. In Drosophila orena (Fruit fly), this protein is Protein hunchback (hb).